Consider the following 169-residue polypeptide: Der GTPase-activating protein YihI (169 aa).

2 disordered regions span residues 1-100 (MKPS…AELE) and 144-169 (GLSY…LRGN). Residues 10–19 (SKGHAKARRK) are compositionally biased toward basic residues. The segment covering 20-30 (TREELDQEARD) has biased composition (basic and acidic residues). Residues 31-40 (RKRQKKRRGH) are compositionally biased toward basic residues. Polar residues predominate over residues 49-58 (GNTSSGSKGQ). Positions 147 to 159 (YDDDEEEEEDEKQ) are enriched in acidic residues. Basic and acidic residues predominate over residues 160 to 169 (EDMMRLLRGN).

The protein belongs to the YihI family. Interacts with Der.

In terms of biological role, a GTPase-activating protein (GAP) that modifies Der/EngA GTPase function. May play a role in ribosome biogenesis. The chain is Der GTPase-activating protein YihI from Escherichia coli (strain SMS-3-5 / SECEC).